The sequence spans 306 residues: Glutaminase (306 aa).

Residues Ser64, Asn115, Glu159, Asn166, Tyr190, Tyr242, and Val260 each coordinate substrate.

The protein belongs to the glutaminase family. In terms of assembly, homotetramer.

The catalysed reaction is L-glutamine + H2O = L-glutamate + NH4(+). The protein is Glutaminase of Vibrio cholerae serotype O1 (strain ATCC 39541 / Classical Ogawa 395 / O395).